The chain runs to 323 residues: DNA primase small subunit PriS (323 aa).

Residues Asp-97, Asp-99, and Asp-274 contribute to the active site.

The protein belongs to the eukaryotic-type primase small subunit family. Heterodimer of a small subunit (PriS) and a large subunit (PriL). Mg(2+) is required as a cofactor. It depends on Mn(2+) as a cofactor.

Catalytic subunit of DNA primase, an RNA polymerase that catalyzes the synthesis of short RNA molecules used as primers for DNA polymerase during DNA replication. The small subunit contains the primase catalytic core and has DNA synthesis activity on its own. Binding to the large subunit stabilizes and modulates the activity, increasing the rate of DNA synthesis while decreasing the length of the DNA fragments, and conferring RNA synthesis capability. The DNA polymerase activity may enable DNA primase to also catalyze primer extension after primer synthesis. May also play a role in DNA repair. The polypeptide is DNA primase small subunit PriS (Methanothermobacter thermautotrophicus (strain ATCC 29096 / DSM 1053 / JCM 10044 / NBRC 100330 / Delta H) (Methanobacterium thermoautotrophicum)).